We begin with the raw amino-acid sequence, 187 residues long: Peptide deformylase (187 aa).

Fe cation-binding residues include cysteine 107 and histidine 149. Residue glutamate 150 is part of the active site. Residue histidine 153 coordinates Fe cation.

The protein belongs to the polypeptide deformylase family. It depends on Fe(2+) as a cofactor.

It carries out the reaction N-terminal N-formyl-L-methionyl-[peptide] + H2O = N-terminal L-methionyl-[peptide] + formate. Removes the formyl group from the N-terminal Met of newly synthesized proteins. Requires at least a dipeptide for an efficient rate of reaction. N-terminal L-methionine is a prerequisite for activity but the enzyme has broad specificity at other positions. This is Peptide deformylase from Synechocystis sp. (strain ATCC 27184 / PCC 6803 / Kazusa).